Reading from the N-terminus, the 327-residue chain is Clavesin-2 (327 aa).

The 162-residue stretch at 96 to 257 folds into the CRAL-TRIO domain; the sequence is IKQALKDGFP…EFGGMLPPYD (162 aa). The tract at residues 287–327 is disordered; it reads EVEKELSPKSMKRSQSVVDPTVLKRMDKNEEENMQPLLSLD. Phosphoserine is present on Ser-325.

Forms a complex with clathrin heavy chain and gamma-adaptin.

Its subcellular location is the golgi apparatus. It localises to the trans-Golgi network membrane. The protein resides in the cytoplasmic vesicle. It is found in the clathrin-coated vesicle. The protein localises to the early endosome membrane. Required for normal morphology of late endosomes and/or lysosomes in neurons. Binds phosphatidylinositol 3,5-bisphosphate (PtdIns(3,5)P2). This is Clavesin-2 (CLVS2) from Homo sapiens (Human).